A 146-amino-acid polypeptide reads, in one-letter code: uncharacterized protein (146 aa).

5 consecutive transmembrane segments (helical) span residues 5–27, 32–49, 61–80, 90–108, and 120–142; these read GAMV…YGLA, FVYV…YIIL, LAVM…FFSG, SLGL…ARVF, and FFLK…MLFL.

It is found in the cell membrane. This is an uncharacterized protein from Archaeoglobus fulgidus (strain ATCC 49558 / DSM 4304 / JCM 9628 / NBRC 100126 / VC-16).